The primary structure comprises 473 residues: MKSELIFLPAPAIGHLVGMVEMAKLFISRHENLSVTVLIAKFYMDTGVDNYNKSLLTNPTPRLTIVNLPETDPQNYMLKPRHAIFPSVIETQKTHVRDIISGMTQSESTRVVGLLADLLFINIMDIANEFNVPTYVYSPAGAGHLGLAFHLQTLNDKKQDVTEFRNSDTELLVPSFANPVPAEVLPSMYVDKEGGYDYLFSLFRRCRESKAIIINTFEELEPYAINSLRMDSMIPPIYPVGPILNLNGDGQNSDEAAVILGWLDDQPPSSVVFLCFGSYGSFQENQVKEIAMGLERSGHRFLWSLRPSIPKGETKLQLKYSNLKEILPVGFLDRTSCVGKVIGWAPQVAVLAHKAVGGFVSHCGWNSILESVWYDMSVATWPMYGEQQLNAFEMVKELGLAVEIEVDYRNEYNKTGFIVRADEIETKIKKLMMDEKNSEIRKKVKEMKEKSRVAMSENGSSYTSLAKLFEKIM.

Catalysis depends on histidine 15, which acts as the Proton acceptor. Histidine 15 lines the an anthocyanidin pocket. Aspartate 117 serves as the catalytic Charge relay. UDP-alpha-D-glucose-binding residues include alanine 345, glutamine 347, histidine 362, tryptophan 365, asparagine 366, serine 367, and glutamate 370. Glycine 385 lines the an anthocyanidin pocket. The UDP-alpha-D-glucose site is built by glutamate 386 and glutamine 387.

Belongs to the UDP-glycosyltransferase family.

The catalysed reaction is (20S)-protopanaxadiol + UDP-alpha-D-glucose = (20S)-ginsenoside C-K + UDP + H(+). The protein operates within secondary metabolite biosynthesis; terpenoid biosynthesis. In terms of biological role, component of the triterpene saponins (e.g. PPD-type ginsenosides or panaxosides) biosynthetic pathways. Glycosyltransferase that catalyzes the biosynthesis of compound K from protopanaxadiol (PPD). This Panax ginseng (Korean ginseng) protein is UDP-glycosyltransferase 71A27.